The primary structure comprises 302 residues: Enolase-phosphatase E1 (302 aa).

Over residues 1 to 10 (MSDSRLRRRQ) the composition is skewed to basic residues. The tract at residues 1–25 (MSDSRLRRRQGTAGTDNKRRADGPH) is disordered. A compositionally biased stretch (basic and acidic residues) spans 16–25 (DNKRRADGPH). Mg(2+) is bound by residues aspartate 40 and glutamate 42. Residues 183–184 (SS) and lysine 217 each bind substrate. Aspartate 242 lines the Mg(2+) pocket.

It belongs to the HAD-like hydrolase superfamily. MasA/MtnC family. Monomer. It depends on Mg(2+) as a cofactor.

The protein resides in the cytoplasm. It localises to the nucleus. The enzyme catalyses 5-methylsulfanyl-2,3-dioxopentyl phosphate + H2O = 1,2-dihydroxy-5-(methylsulfanyl)pent-1-en-3-one + phosphate. It functions in the pathway amino-acid biosynthesis; L-methionine biosynthesis via salvage pathway; L-methionine from S-methyl-5-thio-alpha-D-ribose 1-phosphate: step 3/6. The protein operates within amino-acid biosynthesis; L-methionine biosynthesis via salvage pathway; L-methionine from S-methyl-5-thio-alpha-D-ribose 1-phosphate: step 4/6. Bifunctional enzyme that catalyzes the enolization of 2,3-diketo-5-methylthiopentyl-1-phosphate (DK-MTP-1-P) into the intermediate 2-hydroxy-3-keto-5-methylthiopentenyl-1-phosphate (HK-MTPenyl-1-P), which is then dephosphorylated to form the acireductone 1,2-dihydroxy-3-keto-5-methylthiopentene (DHK-MTPene). This Branchiostoma floridae (Florida lancelet) protein is Enolase-phosphatase E1.